We begin with the raw amino-acid sequence, 696 residues long: DNA ligase (696 aa).

Residues aspartate 36–aspartate 40, serine 85–leucine 86, and glutamate 123 each bind NAD(+). The active-site N6-AMP-lysine intermediate is lysine 125. NAD(+) contacts are provided by arginine 146, glutamate 181, lysine 319, and lysine 343. Residues cysteine 437, cysteine 440, cysteine 455, and cysteine 461 each coordinate Zn(2+). A BRCT domain is found at proline 618–leucine 696.

It belongs to the NAD-dependent DNA ligase family. LigA subfamily. Mg(2+) serves as cofactor. Mn(2+) is required as a cofactor.

The enzyme catalyses NAD(+) + (deoxyribonucleotide)n-3'-hydroxyl + 5'-phospho-(deoxyribonucleotide)m = (deoxyribonucleotide)n+m + AMP + beta-nicotinamide D-nucleotide.. In terms of biological role, DNA ligase that catalyzes the formation of phosphodiester linkages between 5'-phosphoryl and 3'-hydroxyl groups in double-stranded DNA using NAD as a coenzyme and as the energy source for the reaction. It is essential for DNA replication and repair of damaged DNA. This Bordetella pertussis (strain Tohama I / ATCC BAA-589 / NCTC 13251) protein is DNA ligase.